Reading from the N-terminus, the 446-residue chain is DDB1- and CUL4-associated factor 12-A (446 aa).

The span at 1–12 shows a compositional bias: basic residues; that stretch reads MTRRSVSRKRRA. Residues 1–32 are disordered; sequence MTRRSVSRKRRANPGSGPGEQSDWDHSAHKRK. WD repeat units follow at residues 132–173, 177–215, 245–284, and 333–370; these read SHQS…PVCV, GHND…VNKS, PVNC…SKLL, and EQGS…FLED.

It belongs to the WD repeat DCAF12 family. Component of the DCX(DCAF12) E3 ubiquitin ligase complex, at least composed of cul4 (cul4a or cul4b), ddb1, dcaf12 and rbx1.

It is found in the cytoplasm. It localises to the cytoskeleton. The protein localises to the microtubule organizing center. Its subcellular location is the centrosome. The protein resides in the nucleus. The protein operates within protein modification; protein ubiquitination. Its function is as follows. Substrate-recognition component of a DCX (DDB1-CUL4-X-box) E3 ubiquitin-protein ligase complex of the DesCEND (destruction via C-end degrons) pathway, which recognizes a C-degron located at the extreme C terminus of target proteins, leading to their ubiquitination and degradation. The C-degron recognized by the DesCEND pathway is usually a motif of less than ten residues and can be present in full-length proteins, truncated proteins or proteolytically cleaved forms. The DCX(DCAF12) complex specifically recognizes proteins with a diglutamate (Glu-Glu) at the C-terminus leading to their ubiquitination and degradation. Also directly recognizes the C-terminal glutamate-leucine (Glu-Leu) degron as an alternative degron in proteins leading to their ubiquitination and degradation. In Xenopus laevis (African clawed frog), this protein is DDB1- and CUL4-associated factor 12-A (dcaf12-a).